The primary structure comprises 286 residues: Pyridoxal kinase PdxY (286 aa).

Residues Ser-9 and 44–45 (MQ) each bind substrate. The ATP site is built by Asp-111, Glu-147, and Lys-180. Asp-221 serves as a coordination point for substrate.

The protein belongs to the pyridoxine kinase family. PdxY subfamily. In terms of assembly, homodimer. Mg(2+) is required as a cofactor.

The enzyme catalyses pyridoxal + ATP = pyridoxal 5'-phosphate + ADP + H(+). It functions in the pathway cofactor metabolism; pyridoxal 5'-phosphate salvage; pyridoxal 5'-phosphate from pyridoxal: step 1/1. Its function is as follows. Pyridoxal kinase involved in the salvage pathway of pyridoxal 5'-phosphate (PLP). Catalyzes the phosphorylation of pyridoxal to PLP. This Burkholderia orbicola (strain AU 1054) protein is Pyridoxal kinase PdxY.